A 314-amino-acid chain; its full sequence is Ribosomal RNA small subunit methyltransferase H (314 aa).

S-adenosyl-L-methionine-binding positions include Gly-37–His-39, Asp-56, Phe-86, Asp-108, and His-115.

The protein belongs to the methyltransferase superfamily. RsmH family.

It localises to the cytoplasm. The catalysed reaction is cytidine(1402) in 16S rRNA + S-adenosyl-L-methionine = N(4)-methylcytidine(1402) in 16S rRNA + S-adenosyl-L-homocysteine + H(+). In terms of biological role, specifically methylates the N4 position of cytidine in position 1402 (C1402) of 16S rRNA. This chain is Ribosomal RNA small subunit methyltransferase H, found in Leptospira biflexa serovar Patoc (strain Patoc 1 / ATCC 23582 / Paris).